The primary structure comprises 162 residues: Methyl-coenzyme M reductase II operon protein D (162 aa).

MCR is composed of three subunits: alpha, beta, and gamma. The function of protein D is not known.

The chain is Methyl-coenzyme M reductase II operon protein D (mrtD) from Methanothermobacter thermautotrophicus (strain ATCC 29096 / DSM 1053 / JCM 10044 / NBRC 100330 / Delta H) (Methanobacterium thermoautotrophicum).